The primary structure comprises 700 residues: Glycine--tRNA ligase beta subunit (700 aa).

It belongs to the class-II aminoacyl-tRNA synthetase family. Tetramer of two alpha and two beta subunits.

The protein localises to the cytoplasm. It carries out the reaction tRNA(Gly) + glycine + ATP = glycyl-tRNA(Gly) + AMP + diphosphate. The chain is Glycine--tRNA ligase beta subunit from Janthinobacterium sp. (strain Marseille) (Minibacterium massiliensis).